The sequence spans 729 residues: Solute carrier family 15 member 2 (729 aa).

Positions 1 to 34 are disordered; it reads MNPFQKNESKETLFSPVSIEEVPPRPPSPPKKPS. Residues 1-57 are Cytoplasmic-facing; sequence MNPFQKNESKETLFSPVSIEEVPPRPPSPPKKPSPTICGSNYPLSIAFIVVNEFCER. The residue at position 9 (serine 9) is a Phosphoserine. Threonine 12 is subject to Phosphothreonine. The span at 24-33 shows a compositional bias: pro residues; the sequence is PRPPSPPKKP. Serine 28 carries the phosphoserine modification. The helical transmembrane segment at 58–78 threads the bilayer; it reads FSYYGMKAVLILYFLYFLHWN. Topologically, residues 79–83 are extracellular; it reads EDTST. The helical transmembrane segment at 84-104 threads the bilayer; that stretch reads SIYHAFSSLCYFTPILGAAIA. The Cytoplasmic segment spans residues 105 to 113; sequence DSWLGKFKT. A helical transmembrane segment spans residues 114–134; the sequence is IIYLSLVYVLGHVIKSLGALP. The Extracellular segment spans residues 135-139; that stretch reads ILGGQ. A helical transmembrane segment spans residues 140–160; that stretch reads VVHTVLSLIGLSLIALGTGGI. Topologically, residues 161 to 183 are cytoplasmic; it reads KPCVAAFGGDQFEEKHAEERTRY. Residues 184 to 204 form a helical membrane-spanning segment; that stretch reads FSVFYLSINAGSLISTFITPM. At 205–217 the chain is on the extracellular side; it reads LRGDVQCFGEDCY. A helical transmembrane segment spans residues 218-238; sequence ALAFGVPGLLMVIALVVFAMG. Residues 239–295 are Cytoplasmic-facing; the sequence is SKIYNKPPPEGNIVAQVFKCIWFAISNRFKNRSGDIPKRQHWLDWAAEKYPKQLIMD. The chain crosses the membrane as a helical span at residues 296-316; the sequence is VKALTRVLFLYIPLPMFWALL. Topologically, residues 317–343 are extracellular; that stretch reads DQQGSRWTLQAIRMNRNLGFFVLQPDQ. A helical transmembrane segment spans residues 344-364; it reads MQVLNPLLVLIFIPLFDFVIY. Residues 365-380 are Cytoplasmic-facing; it reads RLVSKCGINFSSLRKM. Residues 381 to 401 form a helical membrane-spanning segment; that stretch reads AVGMILACLAFAVAAAVEIKI. Topologically, residues 402 to 611 are extracellular; the sequence is NEMAPAQPGP…PANKMSIAWQ (210 aa). The segment at 402–611 is extracellular domain (ECD); the sequence is NEMAPAQPGP…PANKMSIAWQ (210 aa). 5 N-linked (GlcNAc...) asparagine glycosylation sites follow: asparagine 435, asparagine 472, asparagine 528, asparagine 567, and asparagine 587. A helical transmembrane segment spans residues 612–632; that stretch reads LPQYALVTAGEVMFSVTGLEF. Topologically, residues 633 to 643 are cytoplasmic; sequence SYSQAPSSMKS. The helical transmembrane segment at 644-664 threads the bilayer; it reads VLQAAWLLTIAVGNIIVLVVA. The Extracellular segment spans residues 665-674; the sequence is QFSGLVQWAE. A helical membrane pass occupies residues 675–695; that stretch reads FILFSCLLLVICLIFSIMGYY. Residues 696–729 are Cytoplasmic-facing; it reads YVPVKTEDMRGPADKHIPHIQGNMIKLETKKTKL.

It belongs to the major facilitator superfamily. Proton-dependent oligopeptide transporter (POT/PTR) (TC 2.A.17) family. As to quaternary structure, interacts (via extracellular domain region) with trypsin. As to expression, expressed in kidney. Not detected in intestine. Highly expressed in macrophages.

It is found in the apical cell membrane. The protein localises to the cytoplasmic vesicle. Its subcellular location is the phagosome membrane. The protein resides in the cell membrane. It carries out the reaction a dipeptide(out) + 2 H(+)(out) = a dipeptide(in) + 2 H(+)(in). The catalysed reaction is N-acetyl-D-muramoyl-L-alanyl-D-isoglutamine(out) + 3 H(+)(out) = N-acetyl-D-muramoyl-L-alanyl-D-isoglutamine(in) + 3 H(+)(in). It catalyses the reaction glycyl-L-leucine(out) + 2 H(+)(out) = glycyl-L-leucine(in) + 2 H(+)(in). The enzyme catalyses glycyl-L-lysine(out) + 2 H(+)(out) = glycyl-L-lysine(in) + 2 H(+)(in). It carries out the reaction glycyl-L-glutamate(out) + 3 H(+)(out) = glycyl-L-glutamate(in) + 3 H(+)(in). The catalysed reaction is L-alanyl-L-alanine(out) + 2 H(+)(out) = L-alanyl-L-alanine(in) + 2 H(+)(in). It catalyses the reaction an L-amino acid tripeptide(out) + 2 H(+)(out) = an L-amino acid tripeptide(in) + 2 H(+)(in). The enzyme catalyses carnosine(out) + 2 H(+)(out) = carnosine(in) + 2 H(+)(in). Functionally, proton-coupled amino-acid transporter that transports oligopeptides of 2 to 4 amino acids with a preference for dipeptides. Transports neutral and anionic dipeptides with a proton to peptide stoichiometry of 2:1 or 3:1. In kidney, involved in the absorption of circulating di- and tripeptides from the glomerular filtrate. Can also transport beta-lactam antibiotics, such as the aminocephalosporin cefadroxil, and other antiviral and anticancer drugs. Transports the dipeptide-like aminopeptidase inhibitor bestatin. Also able to transport carnosine. Involved in innate immunity by promoting the detection of microbial pathogens by NOD-like receptors (NLRs). Mediates transport of bacterial peptidoglycans across the plasma membrane or, in macrophages, the phagosome membrane: catalyzes the transport of certain bacterial peptidoglycans, such as muramyl dipeptide (MDP), the NOD2 ligand. The chain is Solute carrier family 15 member 2 from Homo sapiens (Human).